The following is a 327-amino-acid chain: DNA repair and recombination protein RadA (327 aa).

ATP is bound at residue Gly113–Ser120.

The protein belongs to the eukaryotic RecA-like protein family.

Involved in DNA repair and in homologous recombination. Binds and assemble on single-stranded DNA to form a nucleoprotein filament. Hydrolyzes ATP in a ssDNA-dependent manner and promotes DNA strand exchange between homologous DNA molecules. In Ignicoccus hospitalis (strain KIN4/I / DSM 18386 / JCM 14125), this protein is DNA repair and recombination protein RadA.